The primary structure comprises 427 residues: 3-phosphoshikimate 1-carboxyvinyltransferase (427 aa).

3-phosphoshikimate contacts are provided by Lys22, Ser23, and Arg27. Lys22 lines the phosphoenolpyruvate pocket. Gly96 and Arg124 together coordinate phosphoenolpyruvate. Ser170, Ser171, Gln172, Ser198, Asp314, Asn337, and Lys341 together coordinate 3-phosphoshikimate. Residue Gln172 coordinates phosphoenolpyruvate. Asp314 (proton acceptor) is an active-site residue. 3 residues coordinate phosphoenolpyruvate: Arg345, Arg387, and Lys412.

This sequence belongs to the EPSP synthase family. In terms of assembly, monomer.

It is found in the cytoplasm. It catalyses the reaction 3-phosphoshikimate + phosphoenolpyruvate = 5-O-(1-carboxyvinyl)-3-phosphoshikimate + phosphate. It functions in the pathway metabolic intermediate biosynthesis; chorismate biosynthesis; chorismate from D-erythrose 4-phosphate and phosphoenolpyruvate: step 6/7. Its function is as follows. Catalyzes the transfer of the enolpyruvyl moiety of phosphoenolpyruvate (PEP) to the 5-hydroxyl of shikimate-3-phosphate (S3P) to produce enolpyruvyl shikimate-3-phosphate and inorganic phosphate. This is 3-phosphoshikimate 1-carboxyvinyltransferase from Sulfurovum sp. (strain NBC37-1).